The primary structure comprises 408 residues: MKQESSFLAKLANGSLVLQILVGIIAGVSLASFSHEAAKQVAFLGSLFVGALKAIAPILVFILVASSIANQKKNTQTNMRPIVVLYLFGTFAAALTAVLLSMMFPTNLVLVAGVEGTSPPQGIGEVINTLLFKLVDNPVNALMTGNYIGILAWGVGLGLALHHASDSTKQVFADVSHGISQMVRFIIRLAPIGIFGLVAATFAETGFAAIAGYAKLLAVLLGAMAIIALIVNPLIVYVKIKRNPYPLVIRCLRESGVTAFFTRSSAANIPVNMALCEKLKLHEDTYSVSIPLGATINMGGAAITITVLTLAAAHTLGIQVDLLTALLLSVVAAVSACGASGVAGGSLLLIPLACSLFGISNDVAMQVVAVGFIIGVIQDAAETALNSSTDVIFTAAACEAAENKAKLG.

Helical transmembrane passes span 11–31 (LANGSLVLQILVGIIAGVSLA), 43–63 (FLGSLFVGALKAIAPILVFIL), 82–102 (IVVLYLFGTFAAALTAVLLSM), 141–161 (ALMTGNYIGILAWGVGLGLAL), 192–212 (IGIFGLVAATFAETGFAAIAG), 216–236 (LLAVLLGAMAIIALIVNPLIV), 298–318 (MGGAAITITVLTLAAAHTLGI), 339–359 (ASGVAGGSLLLIPLACSLFGI), and 363–383 (VAMQVVAVGFIIGVIQDAAET).

The protein belongs to the dicarboxylate/amino acid:cation symporter (DAACS) (TC 2.A.23) family.

The protein resides in the cell inner membrane. The catalysed reaction is L-serine(in) + Na(+)(in) = L-serine(out) + Na(+)(out). It catalyses the reaction L-threonine(in) + Na(+)(in) = L-threonine(out) + Na(+)(out). Functionally, involved in the import of serine and threonine into the cell, with the concomitant import of sodium (symport system). The protein is Serine/threonine transporter SstT of Shewanella sp. (strain MR-7).